Reading from the N-terminus, the 212-residue chain is ATP phosphoribosyltransferase (212 aa).

Belongs to the ATP phosphoribosyltransferase family. Short subfamily. In terms of assembly, heteromultimer composed of HisG and HisZ subunits.

It localises to the cytoplasm. The enzyme catalyses 1-(5-phospho-beta-D-ribosyl)-ATP + diphosphate = 5-phospho-alpha-D-ribose 1-diphosphate + ATP. Its pathway is amino-acid biosynthesis; L-histidine biosynthesis; L-histidine from 5-phospho-alpha-D-ribose 1-diphosphate: step 1/9. Functionally, catalyzes the condensation of ATP and 5-phosphoribose 1-diphosphate to form N'-(5'-phosphoribosyl)-ATP (PR-ATP). Has a crucial role in the pathway because the rate of histidine biosynthesis seems to be controlled primarily by regulation of HisG enzymatic activity. The protein is ATP phosphoribosyltransferase of Clostridium botulinum (strain ATCC 19397 / Type A).